Here is a 324-residue protein sequence, read N- to C-terminus: Short-chain dehydrogenase/reductase iacJ (324 aa).

NADP(+) is bound by residues I42, K66, D93, N120, Y204, K208, and T239. The Proton donor role is filled by Y204. Catalysis depends on K208, which acts as the Lowers pKa of active site Tyr.

The protein belongs to the short-chain dehydrogenases/reductases (SDR) family.

It participates in secondary metabolite biosynthesis. Short-chain dehydrogenase/reductase; part of the gene cluster that mediates the biosynthesis of iso-A82775C, a enylepoxycyclohexane and biosynthetic precursor of the chloropestolide anticancer natural products. Within the cluster, the prenyltransferase iacE prenylates siccayne to generate pestalodiol E, using dimethylallyl diphosphate (DMAPP) as cosubstrate. The probable oxidoreductase iacF is then involved in the epoxidation of pestalodiol F to pestalodiol F, which is further converted to pestalofone A by the short-chain dehydrogenase/reductase iacG. Iso-A82775C is subsequently generated from pestalofone A by the short-chain dehydrogenase/reductase iacC. Iso-A82775C is further condensed with maldoxin via a Diels-Alder reaction to produce the anticancer natural products chloropestolides A to E. The chain is Short-chain dehydrogenase/reductase iacJ from Pestalotiopsis fici (strain W106-1 / CGMCC3.15140).